The sequence spans 185 residues: MVSSWRVQQAAREVKAGAVIAYPTEAVWGLGCDPWNEDAVYRLLALKSRPVDKGLILIADNIRQFDFLFEDFPQDWIDRMSATWPGPNTWLVPHQDLLPEWVTGQHDTVALRVSDHPQVRELCALVGPLISTSCNPAGRPAAKSRLRVEQYFHNELDMVLGGALGGRKNPSLIRDLATGEVVRPG.

Residues Ser4 to Gly185 enclose the YrdC-like domain.

The protein belongs to the SUA5 family. TsaC subfamily.

The protein localises to the cytoplasm. The enzyme catalyses L-threonine + hydrogencarbonate + ATP = L-threonylcarbamoyladenylate + diphosphate + H2O. Required for the formation of a threonylcarbamoyl group on adenosine at position 37 (t(6)A37) in tRNAs that read codons beginning with adenine. Catalyzes the conversion of L-threonine, HCO(3)(-)/CO(2) and ATP to give threonylcarbamoyl-AMP (TC-AMP) as the acyladenylate intermediate, with the release of diphosphate. This chain is Threonylcarbamoyl-AMP synthase, found in Pseudomonas entomophila (strain L48).